Reading from the N-terminus, the 778-residue chain is MNQENKVLPLIPLRGLIVFPYMVVHFDVGRDKSIEALEKAMMNDQQIFLSTQKDAKIEEPNEDDINSVGTICSIKQILRLPGDAVRVLVEGISRGKIDKYLKQEPFIEAEITEFKDEDNYEEYEIKALMRIITKEFGKYVKLSGAVTKDAVDFLKDIKEPGKFADIVSSYLIIKQEQKQSVLNSIDEKERLENVLTVIKDELQILELERNIGVKVKEKIDKSQREYYLREQIKVMQDQLGDDDEEKAEIKEYTQKIKKGKLTKEAKEKALHELKKLENAGAYSPEGAGIKTYLDWILSLPWKDKTKDNLDIKRAREILNKEHYGLSDVKDRIIEYLAVKKMSKSLKGPILCLVGPPGVGKTSIAKSIANAVNRNFVRISLGGVNDEAEIRGHRRTYVGAIPGRIIYGMKQAKSNNPLMLLDEIDKMSSSYKGESADALLEVLDTSENNKFRDNYLELDFDLSDVMFVTTANTLETIPRPLMDRMEIIEVSGYTYEEKFHIAKEHLIPKQLEEHNMPEDKKITFMDSSIYYIIENYTRESGVRSLERKIAAIIRKIITEIVEKDKSSISVNSRTVKKYLGEDVFSADKIDKEDKIGVVTGMAWTAYGGDTLPVEAVIMPGNGKLQLTGQLGDVMKESAQAGYSYVRANSVKYGIDKEFYKNKDIHVHVPEGAVPKDGPSAGVTMITAMVSALSDKKVKHNVAMTGEITLTGRVLAIGGLKEKTLAAYRAGVDTIIIPKQNEKDINKVPKAIRGKIKFILAEEVDTVLENALIGGINNDN.

A Lon N-terminal domain is found at leucine 8–leucine 202. Residue glycine 354–threonine 361 coordinates ATP. In terms of domain architecture, Lon proteolytic spans glutamate 591–glycine 772. Catalysis depends on residues serine 678 and lysine 721.

Belongs to the peptidase S16 family. In terms of assembly, homohexamer. Organized in a ring with a central cavity.

It is found in the cytoplasm. It carries out the reaction Hydrolysis of proteins in presence of ATP.. Its function is as follows. ATP-dependent serine protease that mediates the selective degradation of mutant and abnormal proteins as well as certain short-lived regulatory proteins. Required for cellular homeostasis and for survival from DNA damage and developmental changes induced by stress. Degrades polypeptides processively to yield small peptide fragments that are 5 to 10 amino acids long. Binds to DNA in a double-stranded, site-specific manner. This is Lon protease from Clostridium acetobutylicum (strain ATCC 824 / DSM 792 / JCM 1419 / IAM 19013 / LMG 5710 / NBRC 13948 / NRRL B-527 / VKM B-1787 / 2291 / W).